The following is a 75-amino-acid chain: Exodeoxyribonuclease 7 small subunit (75 aa).

The protein belongs to the XseB family. In terms of assembly, heterooligomer composed of large and small subunits.

Its subcellular location is the cytoplasm. The enzyme catalyses Exonucleolytic cleavage in either 5'- to 3'- or 3'- to 5'-direction to yield nucleoside 5'-phosphates.. Its function is as follows. Bidirectionally degrades single-stranded DNA into large acid-insoluble oligonucleotides, which are then degraded further into small acid-soluble oligonucleotides. This is Exodeoxyribonuclease 7 small subunit from Thermotoga maritima (strain ATCC 43589 / DSM 3109 / JCM 10099 / NBRC 100826 / MSB8).